We begin with the raw amino-acid sequence, 607 residues long: NAD-dependent malic enzyme 2, mitochondrial (607 aa).

The N-terminal 32 residues, 1–32 (MMWKNIAGLSKAAAAARTHGSRRCFSTAIPGP), are a transit peptide targeting the mitochondrion. Tyrosine 136 functions as the Proton donor in the catalytic mechanism. Arginine 189 is an NAD(+) binding site. Lysine 207 functions as the Proton acceptor in the catalytic mechanism. 3 residues coordinate a divalent metal cation: glutamate 278, aspartate 279, and aspartate 302. The NAD(+) site is built by aspartate 302 and asparagine 449.

Belongs to the malic enzymes family. In terms of assembly, homodimer. Heterodimer of two related subunits in NAD-MEH complex. Interacts with NAD-ME1. Mg(2+) serves as cofactor. It depends on Mn(2+) as a cofactor. In terms of tissue distribution, expressed in leaves, stems, flowers, and roots (at protein level). Present in pollen.

The protein localises to the mitochondrion. It carries out the reaction (S)-malate + NAD(+) = pyruvate + CO2 + NADH. With respect to regulation, activated by 2-ketoglutarate, phosphoenolpyruvate (PEP), fructose 1,6-biphosphate (FBP) and coenzyme A (acetyl-CoA and CoA) as homodimer and by oxaloacetate (OAA), 2-ketoglutarate, succinate, fumarate and CoA as heterodimer NAD-MEH. Repressed by succinate and fumarate as homodimer, in the presence of NAD(+) and competitively toward the substrate L-malate. Functionally, involved in the regulation of sugars and amino acids metabolisms during the night period. In Arabidopsis thaliana (Mouse-ear cress), this protein is NAD-dependent malic enzyme 2, mitochondrial (NAD-ME2).